The following is a 350-amino-acid chain: GTPase Obg (350 aa).

Residues 1 to 159 (MKFLDQAKIY…RWIWLRLKLI (159 aa)) enclose the Obg domain. The OBG-type G domain maps to 160 to 328 (ADVGLVGLPN…VLRLLQDRVT (169 aa)). Residues 166–173 (GLPNAGKS), 191–195 (FTTLH), 213–216 (DIPG), 280–283 (NKID), and 309–311 (SGV) each bind GTP. Mg(2+)-binding residues include Ser-173 and Thr-193. The disordered stretch occupies residues 331 to 350 (REAARDAAPPQAAAGREETA).

The protein belongs to the TRAFAC class OBG-HflX-like GTPase superfamily. OBG GTPase family. In terms of assembly, monomer. Requires Mg(2+) as cofactor.

The protein resides in the cytoplasm. Its function is as follows. An essential GTPase which binds GTP, GDP and possibly (p)ppGpp with moderate affinity, with high nucleotide exchange rates and a fairly low GTP hydrolysis rate. Plays a role in control of the cell cycle, stress response, ribosome biogenesis and in those bacteria that undergo differentiation, in morphogenesis control. The protein is GTPase Obg of Gluconacetobacter diazotrophicus (strain ATCC 49037 / DSM 5601 / CCUG 37298 / CIP 103539 / LMG 7603 / PAl5).